Consider the following 55-residue polypeptide: Large ribosomal subunit protein bL33 (55 aa).

It belongs to the bacterial ribosomal protein bL33 family.

The sequence is that of Large ribosomal subunit protein bL33 from Polaromonas sp. (strain JS666 / ATCC BAA-500).